The chain runs to 187 residues: Troponin I, slow skeletal muscle (187 aa).

Proline 2 is subject to N-acetylproline. Residues 2 to 48 (PEVERKSKITASRKLMLKSLMLAKAKECWEQEHEEREAEKVRYLSER) form an involved in binding TNC region. Phosphoserine is present on serine 58. The segment at 97-118 (LKLKVLDLRGKFKRPPLRRVRV) is involved in binding TNC and actin.

This sequence belongs to the troponin I family. In terms of assembly, binds to actin and tropomyosin.

Troponin I is the inhibitory subunit of troponin, the thin filament regulatory complex which confers calcium-sensitivity to striated muscle actomyosin ATPase activity. This is Troponin I, slow skeletal muscle (Tnni1) from Rattus norvegicus (Rat).